Here is a 347-residue protein sequence, read N- to C-terminus: UDP-3-O-acylglucosamine N-acyltransferase (347 aa).

Catalysis depends on His-241, which acts as the Proton acceptor.

Belongs to the transferase hexapeptide repeat family. LpxD subfamily. Homotrimer.

It catalyses the reaction a UDP-3-O-[(3R)-3-hydroxyacyl]-alpha-D-glucosamine + a (3R)-hydroxyacyl-[ACP] = a UDP-2-N,3-O-bis[(3R)-3-hydroxyacyl]-alpha-D-glucosamine + holo-[ACP] + H(+). The protein operates within bacterial outer membrane biogenesis; LPS lipid A biosynthesis. In terms of biological role, catalyzes the N-acylation of UDP-3-O-acylglucosamine using 3-hydroxyacyl-ACP as the acyl donor. Is involved in the biosynthesis of lipid A, a phosphorylated glycolipid that anchors the lipopolysaccharide to the outer membrane of the cell. The protein is UDP-3-O-acylglucosamine N-acyltransferase of Neisseria meningitidis serogroup A / serotype 4A (strain DSM 15465 / Z2491).